A 443-amino-acid polypeptide reads, in one-letter code: Signal recognition particle 54 kDa protein (443 aa).

GTP contacts are provided by residues 104 to 111, 184 to 188, and 242 to 245; these read GLQGSGKT, DTAGR, and TKLD.

This sequence belongs to the GTP-binding SRP family. SRP54 subfamily. Part of the signal recognition particle protein translocation system, which is composed of SRP and FtsY. Archaeal SRP consists of a 7S RNA molecule of 300 nucleotides and two protein subunits: SRP54 and SRP19.

The protein localises to the cytoplasm. The enzyme catalyses GTP + H2O = GDP + phosphate + H(+). Its function is as follows. Involved in targeting and insertion of nascent membrane proteins into the cytoplasmic membrane. Binds to the hydrophobic signal sequence of the ribosome-nascent chain (RNC) as it emerges from the ribosomes. The SRP-RNC complex is then targeted to the cytoplasmic membrane where it interacts with the SRP receptor FtsY. The polypeptide is Signal recognition particle 54 kDa protein (Methanosarcina barkeri (strain Fusaro / DSM 804)).